A 450-amino-acid chain; its full sequence is uncharacterized protein (450 aa).

Helical transmembrane passes span 10–30, 53–73, 95–115, 120–140, 148–168, 199–219, 242–262, 267–287, 302–322, 343–363, 378–398, and 428–448; these read IIVL…LVIA, LGGG…AIAI, TAGN…LFAI, LLPV…SIFN, AVAC…PVGF, LAML…IFIT, IANI…ATFA, TSST…CGIF, LMAM…VINA, IAAL…GSSF, LSFG…AALG, and VVPT…IAAM.

The protein localises to the cell membrane. This is an uncharacterized protein from Haemophilus influenzae (strain ATCC 51907 / DSM 11121 / KW20 / Rd).